The primary structure comprises 366 residues: Putative zinc metalloprotease slr1821 (366 aa).

Histidine 20 is a Zn(2+) binding site. Glutamate 21 is an active-site residue. Histidine 24 contributes to the Zn(2+) binding site. 3 consecutive transmembrane segments (helical) span residues 95 to 115, 293 to 313, and 325 to 345; these read AIVI…LLIG, AVIN…FLLI, and FQMG…VFLI. The 83-residue stretch at 106–188 folds into the PDZ domain; the sequence is LVFAYFLLIG…VPITVEVQRG (83 aa).

Belongs to the peptidase M50B family. Requires Zn(2+) as cofactor.

The protein resides in the cell inner membrane. This Synechocystis sp. (strain ATCC 27184 / PCC 6803 / Kazusa) protein is Putative zinc metalloprotease slr1821.